The following is a 235-amino-acid chain: Large ribosomal subunit protein uL1 (235 aa).

Belongs to the universal ribosomal protein uL1 family. As to quaternary structure, part of the 50S ribosomal subunit.

Functionally, binds directly to 23S rRNA. The L1 stalk is quite mobile in the ribosome, and is involved in E site tRNA release. In terms of biological role, protein L1 is also a translational repressor protein, it controls the translation of the L11 operon by binding to its mRNA. The sequence is that of Large ribosomal subunit protein uL1 from Synechococcus sp. (strain WH7803).